A 423-amino-acid polypeptide reads, in one-letter code: Adenylosuccinate synthetase (423 aa).

GTP-binding positions include 12 to 18 (GDEGKGK) and 40 to 42 (GHT). The active-site Proton acceptor is the Asp-13. Mg(2+) is bound by residues Asp-13 and Gly-40. Residues 13–16 (DEGK), 38–41 (NAGH), Thr-129, Arg-143, Gln-224, Thr-239, and Arg-303 contribute to the IMP site. His-41 serves as the catalytic Proton donor. 299–305 (SVTGRQR) is a binding site for substrate. GTP is bound by residues Arg-305, 331–333 (KGD), and 412–414 (SVG).

It belongs to the adenylosuccinate synthetase family. Homodimer. Mg(2+) serves as cofactor.

The protein resides in the cytoplasm. It carries out the reaction IMP + L-aspartate + GTP = N(6)-(1,2-dicarboxyethyl)-AMP + GDP + phosphate + 2 H(+). It functions in the pathway purine metabolism; AMP biosynthesis via de novo pathway; AMP from IMP: step 1/2. In terms of biological role, plays an important role in the de novo pathway of purine nucleotide biosynthesis. Catalyzes the first committed step in the biosynthesis of AMP from IMP. The chain is Adenylosuccinate synthetase from Flavobacterium johnsoniae (strain ATCC 17061 / DSM 2064 / JCM 8514 / BCRC 14874 / CCUG 350202 / NBRC 14942 / NCIMB 11054 / UW101) (Cytophaga johnsonae).